The primary structure comprises 369 residues: Superinfection exclusion protein (369 aa).

Positions Met-1–Thr-15 are cleaved as a signal peptide.

This sequence belongs to the serpin family. Orthopoxvirus OPG040 subfamily. In terms of assembly, interacts with OPG185/A56 protein.

It is found in the virion membrane. The protein localises to the host cell membrane. Functionally, negatively regulates superinfection and syncytium formation in infected host cells. Acts in concert with OPG185/A56 protein at the host cell membrane by interacting with and inhibiting the mature virion entry/fusion complex (EFC). This mechanism ensures that new virions released from the cell cannot enter already infected cells. In Vaccinia virus (strain Western Reserve) (VACV), this protein is Superinfection exclusion protein (OPG040).